A 941-amino-acid polypeptide reads, in one-letter code: Coiled-coil domain-containing protein 39 (941 aa).

4 coiled-coil regions span residues 16 to 122, 164 to 273, 306 to 605, and 665 to 825; these read AIPV…ENGI, AQQD…ESEI, QLKG…EIKV, and IKAA…EEQD. The interval 868–941 is disordered; the sequence is PTASTKGSRQ…SNVKSKKSSK (74 aa). Composition is skewed to low complexity over residues 871–903 and 914–934; these read STKGSRQSSRSPSHTSLSARSSRSTSTSTSQSS and SSSLVGSPSRPSSASSSSSNV. Phosphoserine occurs at positions 892 and 900.

This sequence belongs to the CCDC39 family. Mainly expressed in nasal brushings and, to a lesser extent, in lungs and testis.

The protein resides in the cytoplasm. It localises to the cytoskeleton. It is found in the cilium axoneme. Its function is as follows. Required for assembly of dynein regulatory complex (DRC) and inner dynein arm (IDA) complexes, which are responsible for ciliary beat regulation, thereby playing a central role in motility in cilia and flagella. Probably acts together with CCDC40 to form a molecular ruler that determines the 96 nanometer (nm) repeat length and arrangements of components in cilia and flagella. Not required for outer dynein arm complexes assembly. The sequence is that of Coiled-coil domain-containing protein 39 from Homo sapiens (Human).